Here is a 533-residue protein sequence, read N- to C-terminus: MFPRLQAVSAPALLQITLMAVLLAPVLGDCGPPPILPFASPVIQSYETNFRTGTALKYNCHRGYWRVNSSHVICDINGSWIYNVFCAKKRCRNPGELANGKVEIITDLLFGSTIEFSCSKGYSLIGSTTSQCESQGKTVDWSDPLPECVIVKCDSPPDISNGKHSGTDEDLYTYGSLVTYVCDPNYSLLGNASISCLVANKTVGVWSSNPPTCEKVICRQPHIPKGIFLSGFGFYYTYKDTLVISCKKGYILRGSSIIHCEANSKWYPSIPTCEPNGCIDLPEVPYISWERNVLSLKNQEIFEIGSLLKYDCKTGYRPTPNEPRTVTCQENLKWAISKGCERVCCPTPNMEKMRIINERRDFTGVCVYAYEDYIFYMCDEGYYPISADGRSSCQADGMWNPKMPACESAVCLKPDILNGKLSVEKDHYTETENVTIHCDSGYEVVGPQNIICSENRTWTPEIPKCEWEVPEECKQVAAGRKLLECLPNPSDVKMALEVYKLSLEIEQLEKEKYVKIQEKFSKKEMKQLTSALH.

The N-terminal stretch at 1-28 is a signal peptide; the sequence is MFPRLQAVSAPALLQITLMAVLLAPVLG. 7 consecutive Sushi domains span residues 29–88, 89–150, 151–215, 216–275, 276–342, 343–408, and 409–467; these read DCGP…FCAK, KRCR…ECVI, VKCD…TCEK, VICR…TCEP, NGCI…GCER, VCCP…ACES, and AVCL…KCEW. Intrachain disulfides connect Cys-30/Cys-74, Cys-60/Cys-86, Cys-91/Cys-132, Cys-118/Cys-148, Cys-153/Cys-196, Cys-182/Cys-213, Cys-218/Cys-260, Cys-246/Cys-273, Cys-278/Cys-328, Cys-312/Cys-340, Cys-345/Cys-393, Cys-378/Cys-406, Cys-411/Cys-452, and Cys-438/Cys-465. N-linked (GlcNAc...) asparagine glycosylation is found at Asn-68 and Asn-77. 3 N-linked (GlcNAc...) asparagine glycosylation sites follow: Asn-185, Asn-191, and Asn-200. Residues Asn-433 and Asn-455 are each glycosylated (N-linked (GlcNAc...) asparagine).

As to quaternary structure, homooligomer; disulfide-linked. May contain 6-8 monomers per oligomer. Post-translationally, the N-terminus may be blocked. Testis. Not expressed in heart, brain, liver or kidney.

It is found in the cytoplasmic vesicle. Its subcellular location is the secretory vesicle. The protein resides in the acrosome lumen. In terms of biological role, probably involved in the formation of the dense core and M1 domain of the acrosome. May also regulate the release of certain secretory proteins following the acrosomal reaction. The chain is Zona pellucida sperm-binding protein 3 receptor (ZP3R) from Cavia porcellus (Guinea pig).